We begin with the raw amino-acid sequence, 415 residues long: Serine hydroxymethyltransferase (415 aa).

Residues Leu121 and 125-127 (GHL) each bind (6S)-5,6,7,8-tetrahydrofolate. Lys230 bears the N6-(pyridoxal phosphate)lysine mark. 355–357 (SPF) is a (6S)-5,6,7,8-tetrahydrofolate binding site.

This sequence belongs to the SHMT family. As to quaternary structure, homodimer. It depends on pyridoxal 5'-phosphate as a cofactor.

The protein localises to the cytoplasm. The enzyme catalyses (6R)-5,10-methylene-5,6,7,8-tetrahydrofolate + glycine + H2O = (6S)-5,6,7,8-tetrahydrofolate + L-serine. The protein operates within one-carbon metabolism; tetrahydrofolate interconversion. Its pathway is amino-acid biosynthesis; glycine biosynthesis; glycine from L-serine: step 1/1. Its function is as follows. Catalyzes the reversible interconversion of serine and glycine with tetrahydrofolate (THF) serving as the one-carbon carrier. This reaction serves as the major source of one-carbon groups required for the biosynthesis of purines, thymidylate, methionine, and other important biomolecules. Also exhibits THF-independent aldolase activity toward beta-hydroxyamino acids, producing glycine and aldehydes, via a retro-aldol mechanism. This Lactococcus lactis subsp. lactis (strain IL1403) (Streptococcus lactis) protein is Serine hydroxymethyltransferase.